The sequence spans 61 residues: Large ribosomal subunit protein uL30 (61 aa).

This sequence belongs to the universal ribosomal protein uL30 family. In terms of assembly, part of the 50S ribosomal subunit.

The sequence is that of Large ribosomal subunit protein uL30 from Rhizorhabdus wittichii (strain DSM 6014 / CCUG 31198 / JCM 15750 / NBRC 105917 / EY 4224 / RW1) (Sphingomonas wittichii).